A 158-amino-acid polypeptide reads, in one-letter code: 6,7-dimethyl-8-ribityllumazine synthase (158 aa).

5-amino-6-(D-ribitylamino)uracil is bound by residues Phe22, 57–59 (AVE), and 81–83 (AVI). 86-87 (GT) provides a ligand contact to (2S)-2-hydroxy-3-oxobutyl phosphate. The active-site Proton donor is His89. Phe114 lines the 5-amino-6-(D-ribitylamino)uracil pocket. (2S)-2-hydroxy-3-oxobutyl phosphate is bound at residue Arg128.

This sequence belongs to the DMRL synthase family. As to quaternary structure, forms an icosahedral capsid composed of 60 subunits, arranged as a dodecamer of pentamers.

The catalysed reaction is (2S)-2-hydroxy-3-oxobutyl phosphate + 5-amino-6-(D-ribitylamino)uracil = 6,7-dimethyl-8-(1-D-ribityl)lumazine + phosphate + 2 H2O + H(+). Its pathway is cofactor biosynthesis; riboflavin biosynthesis; riboflavin from 2-hydroxy-3-oxobutyl phosphate and 5-amino-6-(D-ribitylamino)uracil: step 1/2. Functionally, catalyzes the formation of 6,7-dimethyl-8-ribityllumazine by condensation of 5-amino-6-(D-ribitylamino)uracil with 3,4-dihydroxy-2-butanone 4-phosphate. This is the penultimate step in the biosynthesis of riboflavin. This chain is 6,7-dimethyl-8-ribityllumazine synthase, found in Shewanella frigidimarina (strain NCIMB 400).